We begin with the raw amino-acid sequence, 97 residues long: Co-chaperonin GroES (97 aa).

It belongs to the GroES chaperonin family. As to quaternary structure, heptamer of 7 subunits arranged in a ring. Interacts with the chaperonin GroEL.

It localises to the cytoplasm. Functionally, together with the chaperonin GroEL, plays an essential role in assisting protein folding. The GroEL-GroES system forms a nano-cage that allows encapsulation of the non-native substrate proteins and provides a physical environment optimized to promote and accelerate protein folding. GroES binds to the apical surface of the GroEL ring, thereby capping the opening of the GroEL channel. This chain is Co-chaperonin GroES, found in Nocardioides sp. (strain ATCC BAA-499 / JS614).